Consider the following 197-residue polypeptide: Phosphoheptose isomerase (197 aa).

An SIS domain is found at 36–197 (MVNALLNEGK…IDRQLFGSEE (162 aa)). Residue 51–53 (NGG) coordinates substrate. Zn(2+) contacts are provided by histidine 60 and glutamate 64. Substrate is bound by residues glutamate 64, 93-94 (ND), 119-121 (STS), serine 124, and glutamine 174. Positions 174 and 182 each coordinate Zn(2+).

It belongs to the SIS family. GmhA subfamily. As to quaternary structure, homotetramer. Zn(2+) serves as cofactor.

It is found in the cytoplasm. The enzyme catalyses 2 D-sedoheptulose 7-phosphate = D-glycero-alpha-D-manno-heptose 7-phosphate + D-glycero-beta-D-manno-heptose 7-phosphate. It functions in the pathway carbohydrate biosynthesis; D-glycero-D-manno-heptose 7-phosphate biosynthesis; D-glycero-alpha-D-manno-heptose 7-phosphate and D-glycero-beta-D-manno-heptose 7-phosphate from sedoheptulose 7-phosphate: step 1/1. In terms of biological role, catalyzes the isomerization of sedoheptulose 7-phosphate in D-glycero-D-manno-heptose 7-phosphate. This chain is Phosphoheptose isomerase, found in Pseudomonas aeruginosa (strain LESB58).